We begin with the raw amino-acid sequence, 583 residues long: 2-succinyl-5-enolpyruvyl-6-hydroxy-3-cyclohexene-1-carboxylate synthase (583 aa).

The protein belongs to the TPP enzyme family. MenD subfamily. As to quaternary structure, homodimer. The cofactor is Mg(2+). It depends on Mn(2+) as a cofactor. Thiamine diphosphate serves as cofactor.

It catalyses the reaction isochorismate + 2-oxoglutarate + H(+) = 5-enolpyruvoyl-6-hydroxy-2-succinyl-cyclohex-3-ene-1-carboxylate + CO2. It functions in the pathway quinol/quinone metabolism; 1,4-dihydroxy-2-naphthoate biosynthesis; 1,4-dihydroxy-2-naphthoate from chorismate: step 2/7. The protein operates within quinol/quinone metabolism; menaquinone biosynthesis. In terms of biological role, catalyzes the thiamine diphosphate-dependent decarboxylation of 2-oxoglutarate and the subsequent addition of the resulting succinic semialdehyde-thiamine pyrophosphate anion to isochorismate to yield 2-succinyl-5-enolpyruvyl-6-hydroxy-3-cyclohexene-1-carboxylate (SEPHCHC). This Chlorobium limicola (strain DSM 245 / NBRC 103803 / 6330) protein is 2-succinyl-5-enolpyruvyl-6-hydroxy-3-cyclohexene-1-carboxylate synthase.